The following is an 841-amino-acid chain: Probable outer membrane protein pmp2 (841 aa).

Positions 1–24 are cleaved as a signal peptide; it reads MKIPLRFLLISLVPTLSMSNLLGA. The region spanning 537 to 841 is the Autotransporter domain; it reads GAPYEKRFWV…NVDAGSKIKF (305 aa).

Belongs to the PMP outer membrane protein family.

It localises to the secreted. Its subcellular location is the cell wall. The protein resides in the cell outer membrane. The polypeptide is Probable outer membrane protein pmp2 (pmp2) (Chlamydia pneumoniae (Chlamydophila pneumoniae)).